Consider the following 424-residue polypeptide: O-methyltransferase aunD (424 aa).

S-adenosyl-L-methionine is bound at residue D275. The Proton acceptor role is filled by H326.

Belongs to the class I-like SAM-binding methyltransferase superfamily. Cation-independent O-methyltransferase family.

It participates in secondary metabolite biosynthesis. O-methyltransferase; part of the gene cluster that mediates the biosynthesis of aurasperone B, a dimeric gamma-naphthopyrone. The first step in the biosynthesis of aurasperone B is the production of gamma-naphthopyrone precursor YWA1 by the non-reducing polyketide synthase albA, via condensation of one acetyl-CoA starter unit with 6 malonyl-CoA units. YWA1 is then methylated by aunE at position C-6 to yield foncesin which is further methylated at position C-8 by aunD to produce fonsecin B. A key enzyme in the biosynthetic pathway is the cytochrome P450 monooxygenase aunB which catalyzes the oxidative dimerization of fonsecin B to aurasperone B. AunB also catalyzes the oxidative dimerization of rubrofusarin B into aurasperone A. The sequence is that of O-methyltransferase aunD from Aspergillus niger (strain ATCC 1015 / CBS 113.46 / FGSC A1144 / LSHB Ac4 / NCTC 3858a / NRRL 328 / USDA 3528.7).